The chain runs to 1522 residues: Dicer-like protein 1 (1522 aa).

The span at 1 to 12 shows a compositional bias: acidic residues; the sequence is MTWAGDVEEQDD. Residues 1-37 are disordered; the sequence is MTWAGDVEEQDDYFSCSDVSTSGDRRKRAPQTVTQEE. Residues 76–258 enclose the Helicase ATP-binding domain; that stretch reads LFLRAKMQNT…EHVREAAREL (183 aa). 89-96 lines the ATP pocket; sequence LDTGTGKT. A DEAH box motif is present at residues 202-205; it reads DEAH. Residues 408 to 576 form the Helicase C-terminal domain; sequence WLNLYYERTT…DVEQEKAELI (169 aa). Residues 600–700 form the Dicer dsRNA-binding fold domain; it reads SLSILSHFVA…LPTISKYLPA (101 aa). Residues 859 to 980 form the PAZ domain; it reads PFWKWSPQSR…ICPEPLHISN (122 aa). RNase III domains lie at 995-1166 and 1222-1373; these read IIHR…MQHH and AHKI…VDSE. The Mg(2+) site is built by E1262, D1359, and E1362. The 70-residue stretch at 1409-1478 folds into the DRBM domain; that stretch reads TRLSRLLSIN…SHAALEKLEG (70 aa). Positions 1421, 1449, 1490, and 1492 each coordinate Zn(2+).

It belongs to the helicase family. Dicer subfamily. Mg(2+) is required as a cofactor. Mn(2+) serves as cofactor.

Its function is as follows. Dicer-like endonuclease involved in cleaving double-stranded RNA in the RNA interference (RNAi) pathway. Produces 21 to 25 bp dsRNAs (siRNAs) which target the selective destruction of homologous RNAs leading to sequence-specific suppression of gene expression, called post-transcriptional gene silencing (PTGS). Part of a broad host defense response against viral infection and transposons. The sequence is that of Dicer-like protein 1 (DCL1) from Phaeosphaeria nodorum (strain SN15 / ATCC MYA-4574 / FGSC 10173) (Glume blotch fungus).